A 387-amino-acid chain; its full sequence is Phosphoglycerate kinase (387 aa).

Residues 21–23, arginine 36, 59–62, arginine 113, and arginine 146 contribute to the substrate site; these read DLN and HLGR. Residues lysine 197, glutamate 314, and 340–343 each bind ATP; that span reads GGDT.

This sequence belongs to the phosphoglycerate kinase family. As to quaternary structure, monomer.

The protein localises to the cytoplasm. The catalysed reaction is (2R)-3-phosphoglycerate + ATP = (2R)-3-phospho-glyceroyl phosphate + ADP. It functions in the pathway carbohydrate degradation; glycolysis; pyruvate from D-glyceraldehyde 3-phosphate: step 2/5. In Yersinia enterocolitica serotype O:8 / biotype 1B (strain NCTC 13174 / 8081), this protein is Phosphoglycerate kinase.